The chain runs to 197 residues: Large ribosomal subunit protein bL25 (197 aa).

The protein belongs to the bacterial ribosomal protein bL25 family. CTC subfamily. Part of the 50S ribosomal subunit; part of the 5S rRNA/L5/L18/L25 subcomplex. Contacts the 5S rRNA. Binds to the 5S rRNA independently of L5 and L18.

This is one of the proteins that binds to the 5S RNA in the ribosome where it forms part of the central protuberance. This Carboxydothermus hydrogenoformans (strain ATCC BAA-161 / DSM 6008 / Z-2901) protein is Large ribosomal subunit protein bL25.